Reading from the N-terminus, the 167-residue chain is Lipoprotein signal peptidase (167 aa).

4 helical membrane-spanning segments follow: residues 8–28, 46–66, 68–88, and 101–121; these read TFLT…VVLL, WGHF…FGLF, QYKI…ALFL, and IALT…LLHG. Catalysis depends on residues aspartate 125 and aspartate 143. The helical transmembrane segment at 139–159 threads the bilayer; it reads FNLADAFISIGTLLLIGHLYF.

Belongs to the peptidase A8 family.

It is found in the cell inner membrane. It carries out the reaction Release of signal peptides from bacterial membrane prolipoproteins. Hydrolyzes -Xaa-Yaa-Zaa-|-(S,diacylglyceryl)Cys-, in which Xaa is hydrophobic (preferably Leu), and Yaa (Ala or Ser) and Zaa (Gly or Ala) have small, neutral side chains.. It functions in the pathway protein modification; lipoprotein biosynthesis (signal peptide cleavage). In terms of biological role, this protein specifically catalyzes the removal of signal peptides from prolipoproteins. The chain is Lipoprotein signal peptidase from Chlamydia trachomatis serovar L2 (strain ATCC VR-902B / DSM 19102 / 434/Bu).